The sequence spans 203 residues: Large ribosomal subunit protein bL25 (203 aa).

This sequence belongs to the bacterial ribosomal protein bL25 family. CTC subfamily. Part of the 50S ribosomal subunit; part of the 5S rRNA/L5/L18/L25 subcomplex. Contacts the 5S rRNA. Binds to the 5S rRNA independently of L5 and L18.

Functionally, this is one of the proteins that binds to the 5S RNA in the ribosome where it forms part of the central protuberance. This is Large ribosomal subunit protein bL25 from Cupriavidus metallidurans (strain ATCC 43123 / DSM 2839 / NBRC 102507 / CH34) (Ralstonia metallidurans).